A 426-amino-acid chain; its full sequence is D-tagatose-1,6-bisphosphate aldolase subunit KbaZ (426 aa).

Belongs to the GatZ/KbaZ family. KbaZ subfamily. In terms of assembly, forms a complex with KbaY.

It participates in carbohydrate metabolism; D-tagatose 6-phosphate degradation; D-glyceraldehyde 3-phosphate and glycerone phosphate from D-tagatose 6-phosphate: step 2/2. Its function is as follows. Component of the tagatose-1,6-bisphosphate aldolase KbaYZ that is required for full activity and stability of the Y subunit. Could have a chaperone-like function for the proper and stable folding of KbaY. When expressed alone, KbaZ does not show any aldolase activity. The chain is D-tagatose-1,6-bisphosphate aldolase subunit KbaZ from Escherichia coli O17:K52:H18 (strain UMN026 / ExPEC).